A 415-amino-acid chain; its full sequence is Hydroxysteroid dehydrogenase-like protein 2 (415 aa).

Residues 17–23 (GASRGIG), lysine 42, and aspartate 74 each bind NADP(+). The active-site Proton acceptor is tyrosine 168. Lysine 172 serves as a coordination point for NADP(+). The region spanning 304 to 412 (AGPVSEMFNT…KLEKMMAMMK (109 aa)) is the SCP2 domain.

Belongs to the short-chain dehydrogenases/reductases (SDR) family.

Its subcellular location is the peroxisome. It is found in the mitochondrion. Its function is as follows. Has apparently no steroid dehydrogenase activity. Might act as a metabolic regulator that affects systemic adaptation to nutritional cues. The protein is Hydroxysteroid dehydrogenase-like protein 2 (hsdl2) of Danio rerio (Zebrafish).